Reading from the N-terminus, the 159-residue chain is tRNA-specific adenosine deaminase (159 aa).

Residues 6 to 133 enclose the CMP/dCMP-type deaminase domain; it reads EEQTYFMQEA…ERLNHRVQVE (128 aa). H57 lines the Zn(2+) pocket. E59 serves as the catalytic Proton donor. Residues C87 and C90 each coordinate Zn(2+).

The protein belongs to the cytidine and deoxycytidylate deaminase family. As to quaternary structure, homodimer. Requires Zn(2+) as cofactor.

The catalysed reaction is adenosine(34) in tRNA + H2O + H(+) = inosine(34) in tRNA + NH4(+). In terms of biological role, catalyzes the deamination of adenosine to inosine at the wobble position 34 of tRNA(Arg2). The chain is tRNA-specific adenosine deaminase from Streptococcus pyogenes serotype M18 (strain MGAS8232).